The primary structure comprises 271 residues: Orotidine 5'-phosphate decarboxylase (271 aa).

Lys95 functions as the Proton donor in the catalytic mechanism.

This sequence belongs to the OMP decarboxylase family. Type 2 subfamily.

The enzyme catalyses orotidine 5'-phosphate + H(+) = UMP + CO2. Its pathway is pyrimidine metabolism; UMP biosynthesis via de novo pathway; UMP from orotate: step 2/2. This is Orotidine 5'-phosphate decarboxylase from Janthinobacterium sp. (strain Marseille) (Minibacterium massiliensis).